The chain runs to 410 residues: MACIDNAMRALFLLALFCVVHGEKAKSKDNDAKASGPGGSFDITKLGASGNGKTDSTKAVQEAWASACGGTGKQTILIPKGDFLVGPLNFTGPCKGDVTIQVNGNLLATTDLSQYKDHGNWIEILRVDNLVITGKGKLDGQGPAVWSKNSCVKKYDCKILPNSLVMDFVNNGEVSGITLLNSKFFHMNMYKCKDMLIKDVNVTAPGDSPNTDGIHMGDSSGVTITNTVIGVGDDCISIGPGTSKVNITGVTCGPGHGISIGSLGRYKDEKDVTDINVKDCTLKKTANGVRIKAYEDAASVLTASKIHYENIKMEDSGYPIIIDMKYCPNKLCTANGASKVTVKDVTFKNITGTSSTPEAVNLLCTAKIPCTGVTMDDVNIKYSGTNNKTMAVCKNAKGSAKGCLKELACF.

Residues 1–22 form the signal peptide; the sequence is MACIDNAMRALFLLALFCVVHG. 2 N-linked (GlcNAc...) asparagine glycosylation sites follow: N89 and N201. 5 PbH1 repeats span residues 192 to 218, 219 to 240, 242 to 262, 272 to 293, and 337 to 377; these read CKDM…HMGD, SSGV…SIGP, TSKV…SIGS, VTDI…RIKA, and ASKV…TMDD. The active-site Proton donor is the D233. A disulfide bridge links C235 with C252. N-linked (GlcNAc...) asparagine glycosylation is present at N246. H256 is an active-site residue. N349 carries an N-linked (GlcNAc...) asparagine glycan. An intrachain disulfide couples C364 to C370. A glycan (N-linked (GlcNAc...) asparagine) is linked at N387. A disulfide bridge connects residues C393 and C409.

The protein belongs to the glycosyl hydrolase 28 family. As to expression, pollen.

It is found in the secreted. The protein localises to the cell wall. The catalysed reaction is [(1-&gt;4)-alpha-D-galacturonosyl](n) + H2O = alpha-D-galacturonate + [(1-&gt;4)-alpha-D-galacturonosyl](n-1). Functionally, may function in depolymerizing pectin during pollen development, germination, and tube growth. Acts as an exo-polygalacturonase. The chain is Exopolygalacturonase (PG2C) from Zea mays (Maize).